The following is a 140-amino-acid chain: Large-conductance mechanosensitive channel (140 aa).

2 helical membrane passes run 16 to 36 (VVDLAVGVIIGAAFGKIVDSI) and 86 to 106 (GSFLTIVLNFLILAFIIFLMV).

Belongs to the MscL family. In terms of assembly, homopentamer.

It is found in the cell inner membrane. Its function is as follows. Channel that opens in response to stretch forces in the membrane lipid bilayer. May participate in the regulation of osmotic pressure changes within the cell. The chain is Large-conductance mechanosensitive channel from Anaeromyxobacter sp. (strain K).